We begin with the raw amino-acid sequence, 226 residues long: PKHD-type hydroxylase Sfri_0612 (226 aa).

The Fe2OG dioxygenase domain occupies 77–177 (KIFPPCFNRY…RIAAITWMQS (101 aa)). Residues histidine 95, aspartate 97, and histidine 158 each contribute to the Fe cation site. A 2-oxoglutarate-binding site is contributed by arginine 168.

The cofactor is Fe(2+). Requires L-ascorbate as cofactor.

This Shewanella frigidimarina (strain NCIMB 400) protein is PKHD-type hydroxylase Sfri_0612.